The chain runs to 323 residues: MAAAARGSGRAPTRRLLVLLLLQLLWAPAGVRAGPEEDLSHRNQEPPAPAQQLQPQPAAVQGLEPARAEKGLTPVAPVHTNKEDAAAQTNLGFIHAFVAAISVIIVSELGDKTFFIAAIMAMRYNRLTVLAGAMLALALMTCLSVLFGYATTVIPRVYTYYVSTALFAIFGIRMLREGLKMSPDEGQEELEEVQAELKKKDEEFQRTKLLNGPDVETGTSTAIPQKKWLHFISPIFVQALTLTFLAEWGDRSQLTTIVLAAREDPYGVAVGGTVGHCLCTGLAVIGGRMIAQKISVRTVTIIGGIVFLAFAFSALFISPESGF.

A signal peptide spans 1–33 (MAAAARGSGRAPTRRLLVLLLLQLLWAPAGVRA). Residues 34-89 (GPEEDLSHRNQEPPAPAQQLQPQPAAVQGLEPARAEKGLTPVAPVHTNKEDAAAQT) are Lumenal-facing. Positions 35–44 (PEEDLSHRNQ) are enriched in basic and acidic residues. Residues 35 to 60 (PEEDLSHRNQEPPAPAQQLQPQPAAV) are disordered. Over residues 50-59 (AQQLQPQPAA) the composition is skewed to low complexity. A helical transmembrane segment spans residues 90-110 (NLGFIHAFVAAISVIIVSELG). At 111–126 (DKTFFIAAIMAMRYNR) the chain is on the cytoplasmic side. The chain crosses the membrane as a helical span at residues 127-147 (LTVLAGAMLALALMTCLSVLF). Topologically, residues 148-151 (GYAT) are lumenal. The chain crosses the membrane as a helical span at residues 152-172 (TVIPRVYTYYVSTALFAIFGI). The Cytoplasmic portion of the chain corresponds to 173–227 (RMLREGLKMSPDEGQEELEEVQAELKKKDEEFQRTKLLNGPDVETGTSTAIPQKK). Residues 184–211 (DEGQEELEEVQAELKKKDEEFQRTKLLN) are a coiled coil. The helical transmembrane segment at 228–248 (WLHFISPIFVQALTLTFLAEW) threads the bilayer. At 249 to 266 (GDRSQLTTIVLAAREDPY) the chain is on the lumenal side. Residues 267 to 287 (GVAVGGTVGHCLCTGLAVIGG) form a helical membrane-spanning segment. Topologically, residues 288–298 (RMIAQKISVRT) are cytoplasmic. Residues 299–319 (VTIIGGIVFLAFAFSALFISP) form a helical membrane-spanning segment. Residues 320 to 323 (ESGF) are Lumenal-facing.

This sequence belongs to the GDT1 family. In terms of tissue distribution, expressed in mammary epithelial cells (at protein level).

It localises to the golgi apparatus membrane. It catalyses the reaction Ca(2+)(in) + n H(+)(out) = Ca(2+)(out) + n H(+)(in). The catalysed reaction is Mn(2+)(in) + n H(+)(out) = Mn(2+)(out) + n H(+)(in). Functionally, putative divalent cation:proton antiporter that exchanges calcium or manganese ions for protons across the Golgi membrane. Mediates the reversible transport of calcium or manganese to the Golgi lumen driven by the proton gradient and possibly the membrane potential generated by V-ATPase. Provides calcium or manganese cofactors to resident Golgi enzymes and contributes to the maintenance of an acidic luminal Golgi pH required for proper functioning of the secretory pathway. Promotes Ca(2+) storage within the Golgi lumen of the mammary epithelial cells to be then secreted into milk. The transport mechanism and stoichiometry remains to be elucidated. The chain is Putative divalent cation/proton antiporter TMEM165 from Mus musculus (Mouse).